The primary structure comprises 154 residues: Protein phosphatase 1 regulatory subunit 27 (154 aa).

ANK repeat units follow at residues 63-92 and 96-125; these read SGLAALHEAVLSGNLECVKLLVKYGADIHQ and AGWTPLHIACSDGYPDIARYLISLGADRDA.

In terms of assembly, interacts with DYSF and PPP1CA.

In terms of biological role, inhibits phosphatase activity of protein phosphatase 1 (PP1) complexes. The polypeptide is Protein phosphatase 1 regulatory subunit 27 (PPP1R27) (Homo sapiens (Human)).